The primary structure comprises 600 residues: CDK5RAP1-like protein (600 aa).

The disordered stretch occupies residues 45 to 66 (LSSAAHPPPPPPRRLARSGPSR). The region spanning 93–222 (GRIYHETYGC…LPRLLQEVDY (130 aa)) is the MTTase N-terminal domain. [4Fe-4S] cluster-binding residues include cysteine 102, cysteine 139, cysteine 185, cysteine 260, cysteine 264, and cysteine 267. In terms of domain architecture, Radical SAM core spans 246 to 501 (SDNSVTAFVS…ISTFRETTAK (256 aa)). The TRAM domain occupies 504-580 (DSQVGTVQLV…TASLSGDVIA (77 aa)).

This sequence belongs to the methylthiotransferase family. MiaB subfamily. [4Fe-4S] cluster serves as cofactor.

In terms of biological role, potential regulator of CDK5 activity. This Oryza sativa subsp. japonica (Rice) protein is CDK5RAP1-like protein.